A 203-amino-acid chain; its full sequence is Thymidine kinase (203 aa).

ATP contacts are provided by residues alanine 9–threonine 16 and aspartate 87–glutamine 90. Glutamate 88 (proton acceptor) is an active-site residue. Zn(2+) contacts are provided by cysteine 145, cysteine 147, cysteine 181, and histidine 184.

The protein belongs to the thymidine kinase family. In terms of assembly, homotetramer.

It is found in the cytoplasm. The catalysed reaction is thymidine + ATP = dTMP + ADP + H(+). The polypeptide is Thymidine kinase (Mesorhizobium japonicum (strain LMG 29417 / CECT 9101 / MAFF 303099) (Mesorhizobium loti (strain MAFF 303099))).